A 290-amino-acid chain; its full sequence is 4-hydroxy-tetrahydrodipicolinate synthase (290 aa).

Thr46 serves as a coordination point for pyruvate. The active-site Proton donor/acceptor is Tyr134. Lys163 functions as the Schiff-base intermediate with substrate in the catalytic mechanism. Val205 serves as a coordination point for pyruvate.

This sequence belongs to the DapA family. As to quaternary structure, homotetramer; dimer of dimers.

It localises to the cytoplasm. The catalysed reaction is L-aspartate 4-semialdehyde + pyruvate = (2S,4S)-4-hydroxy-2,3,4,5-tetrahydrodipicolinate + H2O + H(+). The protein operates within amino-acid biosynthesis; L-lysine biosynthesis via DAP pathway; (S)-tetrahydrodipicolinate from L-aspartate: step 3/4. Catalyzes the condensation of (S)-aspartate-beta-semialdehyde [(S)-ASA] and pyruvate to 4-hydroxy-tetrahydrodipicolinate (HTPA). The sequence is that of 4-hydroxy-tetrahydrodipicolinate synthase from Bacillus subtilis (strain 168).